The primary structure comprises 347 residues: Phosphoribosylformylglycinamidine cyclo-ligase (347 aa).

This sequence belongs to the AIR synthase family.

Its subcellular location is the cytoplasm. The catalysed reaction is 2-formamido-N(1)-(5-O-phospho-beta-D-ribosyl)acetamidine + ATP = 5-amino-1-(5-phospho-beta-D-ribosyl)imidazole + ADP + phosphate + H(+). It participates in purine metabolism; IMP biosynthesis via de novo pathway; 5-amino-1-(5-phospho-D-ribosyl)imidazole from N(2)-formyl-N(1)-(5-phospho-D-ribosyl)glycinamide: step 2/2. The sequence is that of Phosphoribosylformylglycinamidine cyclo-ligase from Alcanivorax borkumensis (strain ATCC 700651 / DSM 11573 / NCIMB 13689 / SK2).